Consider the following 494-residue polypeptide: UPF0371 protein SPJ_0333 (494 aa).

The protein belongs to the UPF0371 family.

This is UPF0371 protein SPJ_0333 from Streptococcus pneumoniae (strain JJA).